A 332-amino-acid polypeptide reads, in one-letter code: Receptor polysaccharide phosphotransferase WefC (332 aa).

The protein belongs to the stealth family.

In Streptococcus oralis, this protein is Receptor polysaccharide phosphotransferase WefC (wefC).